The primary structure comprises 351 residues: Major capsid protein (351 aa).

Belongs to the baculoviridae p39 family.

The protein localises to the virion. The sequence is that of Major capsid protein (P39) from Orgyia pseudotsugata (Douglas-fir tussock moth).